A 153-amino-acid polypeptide reads, in one-letter code: MAAGLFGLSARLLLAAAATRGLPAARVRWESSFSRTVVAPSAVAGKRPPEPTTQWQEDPEPEDENLYEKNPDSHGYDKDPVLDVWNMRLVFFFGVSIILVLGSTFVAYLPDYRMKEWSRREAERLVKYREANGLPIMESNCFDPSKIQLPEDE.

A mitochondrion-targeting transit peptide spans 1–29 (MAAGLFGLSARLLLAAAATRGLPAARVRW). Residues 40-77 (PSAVAGKRPPEPTTQWQEDPEPEDENLYEKNPDSHGYD) form a disordered region. Basic and acidic residues predominate over residues 66-77 (LYEKNPDSHGYD). Residues 89–109 (LVFFFGVSIILVLGSTFVAYL) traverse the membrane as a helical segment.

This sequence belongs to the complex I NDUFB11 subunit family. Complex I is composed of 45 different subunits. Interacts with BCAP31.

It is found in the mitochondrion inner membrane. Accessory subunit of the mitochondrial membrane respiratory chain NADH dehydrogenase (Complex I), that is believed not to be involved in catalysis. Complex I functions in the transfer of electrons from NADH to the respiratory chain. The immediate electron acceptor for the enzyme is believed to be ubiquinone. The chain is NADH dehydrogenase [ubiquinone] 1 beta subcomplex subunit 11, mitochondrial (NDUFB11) from Pan troglodytes (Chimpanzee).